A 3473-amino-acid polypeptide reads, in one-letter code: Genome polyprotein (3473 aa).

A coiled-coil region spans residues 514-604 (EVQDALEKSM…RNDIEALKKK (91 aa)). Disordered regions lie at residues 602–644 (KKKP…SEAQ) and 1278–1306 (YLADEQPTTSAPRTSIVNTEDDPPTEGEI). Composition is skewed to polar residues over residues 607 to 622 (QSVTPLPSPSGNSGTA) and 1278 to 1295 (YLADEQPTTSAPRTSIVN). The next 2 helical transmembrane spans lie at 1496-1516 (DKWIWAALASILVGAALLHYY) and 1595-1615 (MSSLLTILSVVASLVMWGKIP). The region spanning 1751 to 1917 (LELMNESYTY…PDVPKNEANP (167 aa)) is the SF3 helicase domain. 1777–1784 (GAPGVGKS) provides a ligand contact to ATP. A helical membrane pass occupies residues 2363–2383 (ILLAIGASVAVAGVAVGAVIL). Over residues 2394–2404 (EDEEIEGEEGE) the composition is skewed to acidic residues. Disordered stretches follow at residues 2394 to 2415 (EDEEIEGEEGETQASGAHESDG) and 2438 to 2465 (VAEAHEEKDAEKPRKSGNPTRKSYLGLS). Over residues 2438–2451 (VAEAHEEKDAEKPR) the composition is skewed to basic and acidic residues. Residues 2632–2850 (GVDRDLSMTN…YAETLTQEHL (219 aa)) enclose the Peptidase C3 domain. Active-site for picornain 3C-like protease activity residues include histidine 2680, glutamate 2717, and cysteine 2811. The 132-residue stretch at 3155–3286 (TKGFAGDYSK…SVHEEFLDVY (132 aa)) folds into the RdRp catalytic domain.

Specific enzymatic cleavages by picornain 3C-like protease in vivo yield mature proteins. Picornain 3C-like protease is autocatalytically processed.

Its subcellular location is the virion. The protein resides in the host membrane. It catalyses the reaction RNA(n) + a ribonucleoside 5'-triphosphate = RNA(n+1) + diphosphate. Functionally, picornain 3C-like protease is a thiol protease that probably cleaves the polyprotein. This Oryza sativa (Rice) protein is Genome polyprotein.